The following is a 507-amino-acid chain: Maturase K (507 aa).

The protein belongs to the intron maturase 2 family. MatK subfamily.

It localises to the plastid. It is found in the chloroplast. Usually encoded in the trnK tRNA gene intron. Probably assists in splicing its own and other chloroplast group II introns. The polypeptide is Maturase K (Cupaniopsis anacardioides (Carrotwood)).